The primary structure comprises 396 residues: Gap junction gamma-1 protein (396 aa).

Topologically, residues 1-18 (MSWSFLTRLLEEIHNHST) are cytoplasmic. Residues 19–39 (FVGKIWLTVLIVFRIVLTAVG) traverse the membrane as a helical segment. Residues 40 to 75 (GESIYYDEQSKFVCNTEQPGCENVCYDAFAPLSHVR) lie on the Extracellular side of the membrane. A helical transmembrane segment spans residues 76–96 (FWVFQIILVATPSVMYLGYAI). At 97 to 175 (HKIAKMEHGE…RRIREDGLMK (79 aa)) the chain is on the cytoplasmic side. The disordered stretch occupies residues 145 to 165 (ELESEKENKEQSQPKPKHDGR). Basic and acidic residues predominate over residues 147-156 (ESEKENKEQS). The chain crosses the membrane as a helical span at residues 176–198 (IYVLQLLARTVFEVGFLIGQYFL). At 199-229 (YGFQVHPFYVCSRLPCPHKIDCFISRPTEKT) the chain is on the extracellular side. A helical transmembrane segment spans residues 230 to 250 (IFLLIMYGVTGLCLLLNIWEM). Topologically, residues 251–396 (LHLGFGTIRD…SGDGKTSVWI (146 aa)) are cytoplasmic. Positions 303–358 (ELSNAKIAYKQNKANIAQEQQYGSHEEHLPADLETLQREIRMAQERLDLAIQAYHH) form a coiled coil. Positions 357–396 (HHQNNPHGPREKKAKVGSKSGSNKSSISSKSGDGKTSVWI) are disordered. Over residues 373–396 (GSKSGSNKSSISSKSGDGKTSVWI) the composition is skewed to low complexity.

It belongs to the connexin family. Gamma-type subfamily. A connexon is composed of a hexamer of connexins. Interacts with CNST.

Its subcellular location is the cell membrane. It localises to the cell junction. The protein resides in the gap junction. Its function is as follows. One gap junction consists of a cluster of closely packed pairs of transmembrane channels, the connexons, through which materials of low MW diffuse from one cell to a neighboring cell. The polypeptide is Gap junction gamma-1 protein (GJC1) (Cricetulus griseus (Chinese hamster)).